The sequence spans 122 residues: Large ribosomal subunit protein uL14c (122 aa).

The protein belongs to the universal ribosomal protein uL14 family. As to quaternary structure, part of the 50S ribosomal subunit.

The protein localises to the plastid. It is found in the chloroplast. Its function is as follows. Binds to 23S rRNA. This Nandina domestica (Heavenly bamboo) protein is Large ribosomal subunit protein uL14c.